Consider the following 338-residue polypeptide: Aspartate carbamoyltransferase catalytic subunit (338 aa).

Positions 59 and 60 each coordinate carbamoyl phosphate. K87 contacts L-aspartate. 3 residues coordinate carbamoyl phosphate: R109, H142, and Q145. L-aspartate contacts are provided by R182 and R253. Residues G294 and P295 each contribute to the carbamoyl phosphate site.

This sequence belongs to the aspartate/ornithine carbamoyltransferase superfamily. ATCase family. Heterododecamer (2C3:3R2) of six catalytic PyrB chains organized as two trimers (C3), and six regulatory PyrI chains organized as three dimers (R2).

The enzyme catalyses carbamoyl phosphate + L-aspartate = N-carbamoyl-L-aspartate + phosphate + H(+). It functions in the pathway pyrimidine metabolism; UMP biosynthesis via de novo pathway; (S)-dihydroorotate from bicarbonate: step 2/3. Its function is as follows. Catalyzes the condensation of carbamoyl phosphate and aspartate to form carbamoyl aspartate and inorganic phosphate, the committed step in the de novo pyrimidine nucleotide biosynthesis pathway. The protein is Aspartate carbamoyltransferase catalytic subunit of Prochlorococcus marinus (strain MIT 9301).